The sequence spans 341 residues: L-threonine 3-dehydrogenase (341 aa).

Cysteine 38 lines the Zn(2+) pocket. Active-site charge relay system residues include threonine 40 and histidine 43. Zn(2+)-binding residues include histidine 63, glutamate 64, cysteine 93, cysteine 96, cysteine 99, and cysteine 107. Residues isoleucine 175, aspartate 195, arginine 200, 262–264 (LGI), and 286–287 (IY) contribute to the NAD(+) site.

This sequence belongs to the zinc-containing alcohol dehydrogenase family. As to quaternary structure, homotetramer. The cofactor is Zn(2+).

It localises to the cytoplasm. The enzyme catalyses L-threonine + NAD(+) = (2S)-2-amino-3-oxobutanoate + NADH + H(+). The protein operates within amino-acid degradation; L-threonine degradation via oxydo-reductase pathway; glycine from L-threonine: step 1/2. Its function is as follows. Catalyzes the NAD(+)-dependent oxidation of L-threonine to 2-amino-3-ketobutyrate. The chain is L-threonine 3-dehydrogenase from Shewanella oneidensis (strain ATCC 700550 / JCM 31522 / CIP 106686 / LMG 19005 / NCIMB 14063 / MR-1).